The sequence spans 499 residues: MLNLFVGLDIYTGLLLLLALAFVLFYEAINGFHDTANAVAAVIYTRAMQPQLAVVMAAFFNFFGVLLGGLSVAYAIVHMLPTDLLLNMGSTHGLAMVFSMLLAAIIWNLGTWFFGLPASSSHTLIGAIIGIGLTNALLTGSSVMDALNLREVTKIFSSLIVSPIVGLVIAGGLIFLLRRYWSGTKKRDRIHRIPEDRKKKKGKRKPPFWTRIALIVSAAGVAFSHGANDGQKGIGLVMLVLVGIAPAGFVVNMNASGYEITRTRDAVTNFEHYLQQHPELPQKLIAMEPPLPAASTDGTQVTEFHCHPANTFDAIARVKTMLPGNMESYEPLSVSQRSQLRRIMLCISDTSAKLAKLPGVSKEDQNLLKKLRSDMLSTIEYAPVWIIMAVALALGIGTMIGWRRVAMTIGEKIGKRGMTYAQGMAAQMTAAVSIGLASYIGMPVSTTHVLSSAVAGTMVVDGGGLQRKTVTSILMAWVFTLPAAIFLSGGLYWIALQLI.

10 helical membrane passes run 5–25 (FVGLDIYTGLLLLLALAFVLF), 52–72 (LAVVMAAFFNFFGVLLGGLSV), 94–114 (LAMVFSMLLAAIIWNLGTWFF), 124–144 (LIGAIIGIGLTNALLTGSSVM), 155–175 (IFSSLIVSPIVGLVIAGGLIF), 207–227 (PFWTRIALIVSAAGVAFSHGA), 233–253 (GIGLVMLVLVGIAPAGFVVNM), 382–402 (APVWIIMAVALALGIGTMIGW), 430–450 (AAVSIGLASYIGMPVSTTHVL), and 473–493 (ILMAWVFTLPAAIFLSGGLYW).

Belongs to the inorganic phosphate transporter (PiT) (TC 2.A.20) family. Pit subfamily.

It is found in the cell inner membrane. It carries out the reaction phosphate(in) + H(+)(in) = phosphate(out) + H(+)(out). Low-affinity inorganic phosphate transporter. This Escherichia coli (strain K12) protein is Low-affinity inorganic phosphate transporter PitB.